The primary structure comprises 772 residues: Ion-translocating oxidoreductase complex subunit C (772 aa).

4Fe-4S ferredoxin-type domains follow at residues 369-397 and 407-436; these read GEPQ…QQLY and KATT…VQYF. [4Fe-4S] cluster is bound by residues Cys-377, Cys-380, Cys-383, Cys-387, Cys-416, Cys-419, Cys-422, and Cys-426. Disordered stretches follow at residues 602–684, 696–717, and 727–746; these read KLEQ…DPRK, ARKL…PRKA, and KARK…QVDP. The span at 605–615 shows a compositional bias: low complexity; that stretch reads QQQANAEPEQQ.

Belongs to the 4Fe4S bacterial-type ferredoxin family. RnfC subfamily. As to quaternary structure, the complex is composed of six subunits: RsxA, RsxB, RsxC, RsxD, RsxE and RsxG. [4Fe-4S] cluster serves as cofactor.

It localises to the cell inner membrane. Part of a membrane-bound complex that couples electron transfer with translocation of ions across the membrane. Required to maintain the reduced state of SoxR. This Escherichia coli O157:H7 (strain EC4115 / EHEC) protein is Ion-translocating oxidoreductase complex subunit C.